Consider the following 144-residue polypeptide: Ribonuclease H (144 aa).

An RNase H type-1 domain is found at 1 to 141 (MKKVEIFTDG…ADRLASEAAD (141 aa)). Residues Asp-9, Glu-47, Asp-69, and Asp-133 each contribute to the Mg(2+) site.

The protein belongs to the RNase H family. Monomer. Mg(2+) is required as a cofactor.

The protein resides in the cytoplasm. It catalyses the reaction Endonucleolytic cleavage to 5'-phosphomonoester.. Endonuclease that specifically degrades the RNA of RNA-DNA hybrids. The protein is Ribonuclease H of Erythrobacter litoralis (strain HTCC2594).